The primary structure comprises 469 residues: Ribulose bisphosphate carboxylase large chain (469 aa).

Positions 1 to 2 (MS) are excised as a propeptide. Pro3 carries the N-acetylproline modification. Residue Lys14 is modified to N6,N6,N6-trimethyllysine. Substrate-binding residues include Asn123 and Thr173. Residue Lys175 is the Proton acceptor of the active site. Lys177 lines the substrate pocket. Mg(2+) is bound by residues Lys201, Asp203, and Glu204. Lys201 carries the post-translational modification N6-carboxylysine. His294 serves as the catalytic Proton acceptor. The substrate site is built by Arg295, His327, and Ser379.

Belongs to the RuBisCO large chain family. Type I subfamily. Heterohexadecamer of 8 large chains and 8 small chains; disulfide-linked. The disulfide link is formed within the large subunit homodimers. Mg(2+) is required as a cofactor. The disulfide bond which can form in the large chain dimeric partners within the hexadecamer appears to be associated with oxidative stress and protein turnover.

The protein resides in the plastid. It localises to the chloroplast. The enzyme catalyses 2 (2R)-3-phosphoglycerate + 2 H(+) = D-ribulose 1,5-bisphosphate + CO2 + H2O. It catalyses the reaction D-ribulose 1,5-bisphosphate + O2 = 2-phosphoglycolate + (2R)-3-phosphoglycerate + 2 H(+). Its function is as follows. RuBisCO catalyzes two reactions: the carboxylation of D-ribulose 1,5-bisphosphate, the primary event in carbon dioxide fixation, as well as the oxidative fragmentation of the pentose substrate in the photorespiration process. Both reactions occur simultaneously and in competition at the same active site. The polypeptide is Ribulose bisphosphate carboxylase large chain (Atriplex patula (Common orache)).